Reading from the N-terminus, the 220-residue chain is 7-cyano-7-deazaguanine synthase (220 aa).

7–17 serves as a coordination point for ATP; the sequence is LSGGMDSSTLA. Residues Cys187, Cys195, Cys198, and Cys201 each contribute to the Zn(2+) site.

Belongs to the QueC family. The cofactor is Zn(2+).

It catalyses the reaction 7-carboxy-7-deazaguanine + NH4(+) + ATP = 7-cyano-7-deazaguanine + ADP + phosphate + H2O + H(+). It participates in purine metabolism; 7-cyano-7-deazaguanine biosynthesis. Functionally, catalyzes the ATP-dependent conversion of 7-carboxy-7-deazaguanine (CDG) to 7-cyano-7-deazaguanine (preQ(0)). The chain is 7-cyano-7-deazaguanine synthase from Methanospirillum hungatei JF-1 (strain ATCC 27890 / DSM 864 / NBRC 100397 / JF-1).